A 776-amino-acid chain; its full sequence is Endonuclease MutS2 (776 aa).

Residue 328 to 335 (GPNTGGKT) coordinates ATP. The region spanning 701–776 (LDLRGKRYEE…GSGATIVTFK (76 aa)) is the Smr domain.

It belongs to the DNA mismatch repair MutS family. MutS2 subfamily. As to quaternary structure, homodimer. Binds to stalled ribosomes, contacting rRNA.

Functionally, endonuclease that is involved in the suppression of homologous recombination and thus may have a key role in the control of bacterial genetic diversity. In terms of biological role, acts as a ribosome collision sensor, splitting the ribosome into its 2 subunits. Detects stalled/collided 70S ribosomes which it binds and splits by an ATP-hydrolysis driven conformational change. Acts upstream of the ribosome quality control system (RQC), a ribosome-associated complex that mediates the extraction of incompletely synthesized nascent chains from stalled ribosomes and their subsequent degradation. Probably generates substrates for RQC. The chain is Endonuclease MutS2 from Streptococcus mutans serotype c (strain ATCC 700610 / UA159).